The chain runs to 99 residues: Ferredoxin, heterocyst (99 aa).

One can recognise a 2Fe-2S ferredoxin-type domain in the interval 4–96 (YQVRLINKKE…NCTIKTHQEP (93 aa)). Residues cysteine 42, cysteine 47, cysteine 50, and cysteine 80 each contribute to the [2Fe-2S] cluster site.

The protein belongs to the 2Fe2S plant-type ferredoxin family. [2Fe-2S] cluster is required as a cofactor.

Its function is as follows. Ferredoxins are iron-sulfur proteins that transfer electrons in a wide variety of metabolic reactions. This Microchaete diplosiphon (Fremyella diplosiphon) protein is Ferredoxin, heterocyst (fdxH).